We begin with the raw amino-acid sequence, 1939 residues long: Myosin-1 (1939 aa).

Residues 33-82 form the Myosin N-terminal SH3-like domain; it reads DAKTSVFVVDPKESFVKATVQSREGGKVTAKTEAGATVTVKDDQVFPMNP. Threonine 64 and threonine 69 each carry phosphothreonine. Residues 86–782 enclose the Myosin motor domain; that stretch reads DKIEDMAMMT…LLGLLEEMRD (697 aa). An N6,N6,N6-trimethyllysine modification is found at lysine 130. Residue 179–186 participates in ATP binding; it reads GESGAGKT. At tyrosine 389 the chain carries Phosphotyrosine. Threonine 419 carries the post-translational modification Phosphothreonine. Residue tyrosine 424 is modified to Phosphotyrosine. The actin-binding stretch occupies residues 659–681; it reads LNKLMTNLRSTHPHFVRCIIPNE. Histidine 757 bears the Pros-methylhistidine mark. The segment at 761-775 is actin-binding; that stretch reads KFGHTKVFFKAGLLG. One can recognise an IQ domain in the interval 785–814; that stretch reads LAQLITRTQAMCRGFLARVEYQKMVERRES. A coiled-coil region spans residues 843–1939; that stretch reads LLKSAETEKE…EVHTKIISEE (1097 aa). 4 positions are modified to phosphoserine: serine 1092, serine 1096, serine 1162, and serine 1237. A Phosphothreonine modification is found at threonine 1241. 2 positions are modified to phosphoserine: serine 1243 and serine 1261. Residues threonine 1265 and threonine 1286 each carry the phosphothreonine modification. Serine 1288, serine 1292, serine 1303, and serine 1306 each carry phosphoserine. Phosphothreonine is present on threonine 1467. Serine 1474 bears the Phosphoserine mark. At tyrosine 1492 the chain carries Phosphotyrosine. Residue serine 1495 is modified to Phosphoserine. Threonine 1501 carries the phosphothreonine modification. Serine 1514 carries the phosphoserine modification. Threonine 1517 carries the phosphothreonine modification. A phosphoserine mark is found at serine 1542, serine 1554, serine 1574, serine 1600, serine 1603, serine 1714, and serine 1726. Phosphothreonine is present on residues threonine 1730 and threonine 1736. Serine 1739 is modified (phosphoserine).

This sequence belongs to the TRAFAC class myosin-kinesin ATPase superfamily. Myosin family. Muscle myosin is a hexameric protein that consists of 2 heavy chain subunits (MHC), 2 alkali light chain subunits (MLC) and 2 regulatory light chain subunits (MLC-2). Interacts with SLC26A5.

Its subcellular location is the cytoplasm. The protein localises to the myofibril. Required for normal hearing. It plays a role in cochlear amplification of auditory stimuli, likely through the positive regulation of prestin (SLC26A5) activity and outer hair cell (OHC) electromotility. In Homo sapiens (Human), this protein is Myosin-1.